A 1243-amino-acid polypeptide reads, in one-letter code: LETPGEEVDNRSLEEILSSIPPPPPPAMASEAGAPRLMITHIVNQNFKSCAGEKILGPFHKRFSCIIGPNGSGKSNVIDSMLFVFGYRAQKIRSKKLSVLIHNSDEHKDIQSCTVEVHFQKIIDKEGDDYEVIPNSNFCVSRTAYRDNTSVYHISGKKRTFKDVGNLLRSHGIDLDHNRFLILQGEVEQIAMMKPKGQTEHDEGMLEYLEDIIGCGRLNEPIKVLCRRVEILNENRGEKLNRVKMVEKEKDAVEGEKNIAIEFLTLEKEMFKKKNHVCQYYIYDLQKRIDEMKTQKEKIHEDTKEITEKSNMLSNEMKAKNSAVKDIEKKLHKATKFIEENKEKFRQLDLEDVQVREKLKHATSKAKKLEKQLQKDKEKVEELKSIPAKSKTIINETTTKSSSLEKEKEKEEKKLKEVMDSLKQETQGLQKEKEDQEKELMGFNKSVNEARSKMEVAQSELDIYLSRHNTAVSQLSKAKETLITASETLKERKAAIGEINTKLPQTQQELKEKEKELQKLTQEEINLKSLVHDLFQKVEEAKSSLAMNRSRGKVLDAIIQEKKSGRIPGIYGRLGDLGAIDEKYDIAISSCCHALDYIVVDSIDTAQECVNFLKRHNIGVATFIGLDKMTVWAKKMAKIQTPENTPRLFDLVKAKNEEIRQAFYFALRDTLVADNLDQATRVAYQKDRRWRVVTLQGQIIEQSGTMTGGGSKVMRGRMGSSVIVEISEEEVNKMESQLQKHSKQARRIQEQKVQHEERVVKLRHSEREMRNTLEKFAASIQGLSDQEEYLTVQIKELEANVLTTAPDKKKQKLLEENVSAFKKEYDAVAEKAGKVEAEVKRLHDTIIEINNRKLKAQQNKLDMINKQLDECASAITKAQVAIKTADRNLIKAQDSVVRTEKEIKDTEKETNDLKAELKAIEDKAEEVIKKTNAAEESLPEIQKEHRNLLQELKVIQENEHALQKDALSIKLKLEQIDGHIAEHNSKIKYWQKEISKIKLHPIEDNPVETVSVLSPEDLEAIKNPDSITNQIAILEAQCHEMKPNLGAIAEYKKKEELYLQRVAELDKITSERDNFRQAYEDLRKQRLNEFMAGFYIITNKLKENYQMLTLGGDAELELVDSLDPFSEGIMFSVRPPKKSWKKIFNLSGGEKTLSSLALVFALHHYKPTPLYFMDEIDAALDFKNVSIVAFYIYEQTKNAQFIIISLRNNMFEISDRLIGIYKTYNITKSVAVNPKEIASKGLC.

The disordered stretch occupies residues 1 to 30 (LETPGEEVDNRSLEEILSSIPPPPPPAMAS). ATP is bound at residue 68-75 (GPNGSGKS). S98 carries the phosphoserine modification. Residues 225-546 (LCRRVEILNE…KVEEAKSSLA (322 aa)) are a coiled coil. Residues K336 and K634 each carry the N6-acetyllysine modification. The 115-residue stretch at 568–682 (PGIYGRLGDL…ADNLDQATRV (115 aa)) folds into the SMC hinge domain. Residues 721–975 (SVIVEISEEE…ALSIKLKLEQ (255 aa)) are a coiled coil. Phosphoserine occurs at positions 937 and 1011. Residues 1062–1090 (VAELDKITSERDNFRQAYEDLRKQRLNEF) are a coiled coil.

The protein belongs to the SMC family. SMC4 subfamily. As to quaternary structure, forms a heterodimer with SMC2. Component of the condensin complex, which contains the SMC2 and SMC4 heterodimer, and three non SMC subunits that probably regulate the complex: BRRN1/CAPH, CNAP1/CAPD2 and CAPG.

Its subcellular location is the nucleus. The protein resides in the cytoplasm. The protein localises to the chromosome. Central component of the condensin complex, a complex required for conversion of interphase chromatin into mitotic-like condense chromosomes. The condensin complex probably introduces positive supercoils into relaxed DNA in the presence of type I topoisomerases and converts nicked DNA into positive knotted forms in the presence of type II topoisomerases. The chain is Structural maintenance of chromosomes protein 4 (SMC4) from Microtus arvalis (Common vole).